A 248-amino-acid polypeptide reads, in one-letter code: Triosephosphate isomerase (248 aa).

Substrate contacts are provided by Asn-11 and Lys-13. The active-site Electrophile is His-95. The active-site Proton acceptor is Glu-165.

Belongs to the triosephosphate isomerase family. Homodimer.

It is found in the cytoplasm. The catalysed reaction is D-glyceraldehyde 3-phosphate = dihydroxyacetone phosphate. It carries out the reaction dihydroxyacetone phosphate = methylglyoxal + phosphate. Its pathway is carbohydrate degradation; glycolysis; D-glyceraldehyde 3-phosphate from glycerone phosphate: step 1/1. It functions in the pathway carbohydrate biosynthesis; gluconeogenesis. In terms of biological role, triosephosphate isomerase is an extremely efficient metabolic enzyme that catalyzes the interconversion between dihydroxyacetone phosphate (DHAP) and D-glyceraldehyde-3-phosphate (G3P) in glycolysis and gluconeogenesis. Its function is as follows. It is also responsible for the non-negligible production of methylglyoxal a reactive cytotoxic side-product that modifies and can alter proteins, DNA and lipids. The protein is Triosephosphate isomerase (tpi1) of Oryzias latipes (Japanese rice fish).